The following is a 1287-amino-acid chain: Vacuolating cytotoxin autotransporter (1287 aa).

The signal sequence occupies residues 1 to 33; the sequence is MEIQQTHRKINRPLVSLALVGALVSITPQQSHA. A disordered region spans residues 326 to 381; it reads PPEGGYKDKPNNTPSQSGAKNDKQESSQNNSNTQVINPPNSTQKTEVQPTQVIDGP. Positions 351–376 are enriched in polar residues; it reads SSQNNSNTQVINPPNSTQKTEVQPTQ. The 274-residue stretch at 1014-1287 folds into the Autotransporter domain; it reads KYEKPTNVWA…ASNLGMRYSF (274 aa).

It localises to the periplasm. The protein resides in the secreted. It is found in the cell surface. The protein localises to the cell outer membrane. Induces vacuolation of eukaryotic cells. Causes ulceration and gastric lesions. The sequence is that of Vacuolating cytotoxin autotransporter (vacA) from Helicobacter pylori (Campylobacter pylori).